Here is a 90-residue protein sequence, read N- to C-terminus: Conotoxin Im6.2 (90 aa).

The first 18 residues, 1 to 18, serve as a signal peptide directing secretion; it reads MKLTILLLVAALLVLTQA. A propeptide spanning residues 19 to 29 is cleaved from the precursor; it reads RTERRRVKSRK. Intrachain disulfides connect cysteine 61/cysteine 75, cysteine 68/cysteine 79, and cysteine 74/cysteine 84. The residue at position 89 (glutamate 89) is a Glutamic acid 1-amide.

It belongs to the conotoxin O2 superfamily. As to expression, expressed by the venom duct.

It is found in the secreted. Functionally, probable neurotoxin. This chain is Conotoxin Im6.2, found in Conus imperialis (Imperial cone).